A 227-amino-acid chain; its full sequence is Fibrillarin-like rRNA/tRNA 2'-O-methyltransferase (227 aa).

S-adenosyl-L-methionine contacts are provided by residues 82–83 (TT), 100–101 (EF), 125–126 (DA), and 145–148 (DVAQ).

It belongs to the methyltransferase superfamily. Fibrillarin family. In terms of assembly, interacts with nop5. Component of box C/D small ribonucleoprotein (sRNP) particles that contain rpl7ae, FlpA and nop5, plus a guide RNA.

Its function is as follows. Involved in pre-rRNA and tRNA processing. Utilizes the methyl donor S-adenosyl-L-methionine to catalyze the site-specific 2'-hydroxyl methylation of ribose moieties in rRNA and tRNA. Site specificity is provided by a guide RNA that base pairs with the substrate. Methylation occurs at a characteristic distance from the sequence involved in base pairing with the guide RNA. The chain is Fibrillarin-like rRNA/tRNA 2'-O-methyltransferase from Methanosarcina acetivorans (strain ATCC 35395 / DSM 2834 / JCM 12185 / C2A).